The sequence spans 323 residues: Arginase-1 (323 aa).

Positions 1 to 27 (MSSKPKPIEIIGAPFSKGQPRGGVEKG) are disordered. Lys17 carries the N6-succinyllysine modification. A phosphoserine mark is found at Ser62 and Ser72. N6-succinyllysine is present on Lys75. Residues His101, Asp124, His126, and Asp128 each coordinate Mn(2+). Residues 126-130 (HTDIN) and 137-139 (SGN) each bind substrate. Phosphoserine is present on Ser163. Position 183 (Asp183) interacts with substrate. At Ser217 the chain carries Phosphoserine. Asp232 and Asp234 together coordinate Mn(2+). 2 residues coordinate substrate: Thr246 and Glu277. Thr281 carries the post-translational modification Phosphothreonine.

The protein belongs to the arginase family. In terms of assembly, homotrimer. Interacts with CMTM6. It depends on Mn(2+) as a cofactor. Detected in liver (at protein level).

The protein localises to the cytoplasm. Its subcellular location is the cytoplasmic granule. It catalyses the reaction L-arginine + H2O = urea + L-ornithine. It functions in the pathway nitrogen metabolism; urea cycle; L-ornithine and urea from L-arginine: step 1/1. With respect to regulation, inactivated by diethyl pyrocarbonate (DEPC). Key element of the urea cycle converting L-arginine to urea and L-ornithine, which is further metabolized into metabolites proline and polyamides that drive collagen synthesis and bioenergetic pathways critical for cell proliferation, respectively; the urea cycle takes place primarily in the liver and, to a lesser extent, in the kidneys. In terms of biological role, functions in L-arginine homeostasis in nonhepatic tissues characterized by the competition between nitric oxide synthase (NOS) and arginase for the available intracellular substrate arginine. Arginine metabolism is a critical regulator of innate and adaptive immune responses. Involved in an antimicrobial effector pathway in polymorphonuclear granulocytes (PMN). Upon PMN cell death is liberated from the phagolysosome and depletes arginine in the microenvironment leading to suppressed T cell and natural killer (NK) cell proliferation and cytokine secretion. In group 2 innate lymphoid cells (ILC2s) promotes acute type 2 inflammation in the lung and is involved in optimal ILC2 proliferation but not survival. Plays a role in the immune response of alternatively activated or M2 macrophages in processes such as wound healing and tissue regeneration, immune defense against multicellular pathogens and parasites, and immune suppression and allergic inflammation; the regulatory outcome seems to be organ specific. In tumor-infiltrating dendritic cells (DCs) and myeloid-derived suppressor cells (MDSCs) plays a role in suppression of T cell-mediated antitumor immunity. The sequence is that of Arginase-1 (Arg1) from Rattus norvegicus (Rat).